Consider the following 314-residue polypeptide: 3'-5' exoribonuclease YhaM (314 aa).

The HD domain occupies 163 to 279; it reads HVVSMLNLAK…LHYIDNLDAK (117 aa).

The protein belongs to the YhaM family.

Shows a 3'-5' exoribonuclease activity. The chain is 3'-5' exoribonuclease YhaM from Bacillus velezensis (strain DSM 23117 / BGSC 10A6 / LMG 26770 / FZB42) (Bacillus amyloliquefaciens subsp. plantarum).